The sequence spans 122 residues: UPF0344 protein BPUM_1008 (122 aa).

Helical transmembrane passes span 5 to 25 (LHIT…ALAG), 33 to 53 (IVHM…VELY), 60 to 80 (IPGF…VIGF), and 93 to 113 (SVTG…LLGL).

This sequence belongs to the UPF0344 family.

The protein localises to the cell membrane. The chain is UPF0344 protein BPUM_1008 from Bacillus pumilus (strain SAFR-032).